The sequence spans 383 residues: Erythronate-4-phosphate dehydrogenase (383 aa).

Residues Ser45 and Thr66 each contribute to the substrate site. Residues Asp146 and Thr175 each contribute to the NAD(+) site. Residue Arg208 is part of the active site. Asp232 is a binding site for NAD(+). Glu237 is a catalytic residue. The active-site Proton donor is the His254. Gly257 is a binding site for NAD(+).

This sequence belongs to the D-isomer specific 2-hydroxyacid dehydrogenase family. PdxB subfamily. Homodimer.

The protein localises to the cytoplasm. It carries out the reaction 4-phospho-D-erythronate + NAD(+) = (R)-3-hydroxy-2-oxo-4-phosphooxybutanoate + NADH + H(+). It functions in the pathway cofactor biosynthesis; pyridoxine 5'-phosphate biosynthesis; pyridoxine 5'-phosphate from D-erythrose 4-phosphate: step 2/5. Catalyzes the oxidation of erythronate-4-phosphate to 3-hydroxy-2-oxo-4-phosphonooxybutanoate. This is Erythronate-4-phosphate dehydrogenase from Chromohalobacter salexigens (strain ATCC BAA-138 / DSM 3043 / CIP 106854 / NCIMB 13768 / 1H11).